The chain runs to 244 residues: 5'-nucleotidase SurE 2 (244 aa).

4 residues coordinate a divalent metal cation: Asp-8, Asp-9, Ser-39, and Asn-96.

It belongs to the SurE nucleotidase family. A divalent metal cation is required as a cofactor.

The protein resides in the cytoplasm. The catalysed reaction is a ribonucleoside 5'-phosphate + H2O = a ribonucleoside + phosphate. In terms of biological role, nucleotidase that shows phosphatase activity on nucleoside 5'-monophosphates. This chain is 5'-nucleotidase SurE 2, found in Thermus thermophilus (strain ATCC BAA-163 / DSM 7039 / HB27).